The following is a 158-amino-acid chain: HTH-type transcriptional repressor NicR (158 aa).

An HTH marR-type domain is found at 20-152; it reads TEQVGHLLRK…ILYLLRKMID (133 aa). Positions 66 to 89 form a DNA-binding region, H-T-H motif; it reads QAELIKATAVDQATIRGIVERLKA.

Its pathway is cofactor degradation; nicotinate degradation [regulation]. Its function is as follows. Transcriptional repressor for the nicCDEFTP and nicXR operons, encoding the lower aerobic nicotinate degradation pathway. Acts under non-induced conditions: repression of the nicCDEFTP and nicXR operons becomes alleviated in presence of 6-hydroxynicotinate (6HNA). This Pseudomonas putida (strain ATCC 47054 / DSM 6125 / CFBP 8728 / NCIMB 11950 / KT2440) protein is HTH-type transcriptional repressor NicR (nicR).